Consider the following 281-residue polypeptide: 3-mercaptopyruvate sulfurtransferase (281 aa).

2 consecutive Rhodanese domains span residues 17–135 and 165–278; these read DDPE…LLEE and HENT…LPVE. A substrate-binding site is contributed by R179. C238 serves as the catalytic Cysteine persulfide intermediate. The segment at 238 to 244 is substrate specificity; it reads CGSGVTA.

As to quaternary structure, monomer.

The protein localises to the cytoplasm. It catalyses the reaction 2-oxo-3-sulfanylpropanoate + [thioredoxin]-dithiol = [thioredoxin]-disulfide + hydrogen sulfide + pyruvate + H(+). In terms of biological role, catalyzes the transfer of sulfur from 3-mercaptopyruvate to a thiol-containing acceptor to form an intramolecular disulfide releasing hydrogen sulfide and pyruvate. May be involved in the enhancement of bacterial growth inhibition by serine. The chain is 3-mercaptopyruvate sulfurtransferase (sseA) from Escherichia coli (strain K12).